Consider the following 572-residue polypeptide: DNA mismatch repair protein MutL (572 aa).

This sequence belongs to the DNA mismatch repair MutL/HexB family.

This protein is involved in the repair of mismatches in DNA. It is required for dam-dependent methyl-directed DNA mismatch repair. May act as a 'molecular matchmaker', a protein that promotes the formation of a stable complex between two or more DNA-binding proteins in an ATP-dependent manner without itself being part of a final effector complex. The chain is DNA mismatch repair protein MutL from Dictyoglomus turgidum (strain DSM 6724 / Z-1310).